The chain runs to 619 residues: Trihelix transcription factor GTL2 (619 aa).

2 disordered regions span residues 11 to 41 and 62 to 100; these read HRFIASPPPPPPLPPHQPAAERSLPFPVSFS and HHHHHHHHHDIKDGGATTGEWIGQTDHDDSDNHHQHHHH. A compositionally biased stretch (pro residues) spans 16–27; that stretch reads SPPPPPPLPPHQ. The region spanning 102 to 154 is the Myb-like 1 domain; that stretch reads PWCSDEVLALLRFRSTVENWFPEFTWEHTSRKLAEVGFKRSPQECKEKFEEEE. Positions 307-361 form a coiled coil; sequence VRNMIAQQEEMHKKLLEDMVKKEEEKIAREEAWKKQEIERVNKEVEIRAQEQAMA. Disordered regions lie at residues 382-414 and 434-458; these read VVQNPTSPSQDSSSLALRKTQGRRKFQTSSSLL and STKTLKPKNQNPKPPKSDDKSDLGK. The span at 384–396 shows a compositional bias: polar residues; the sequence is QNPTSPSQDSSSL. Low complexity predominate over residues 435-444; sequence TKTLKPKNQN. Basic and acidic residues predominate over residues 448–458; sequence PKSDDKSDLGK. The region spanning 459–526 is the Myb-like 2 domain; that stretch reads RWPKDEVLAL…RCKEKWENIN (68 aa). The short motif at 503–510 is the Nuclear localization signal element; the sequence is SKKMLEIG. A disordered region spans residues 557 to 619; that stretch reads SQPPTGTTAT…VQFSGFDLEF (63 aa). Residues 561–574 are compositionally biased toward low complexity; it reads TGTTATTATTATSA. Over residues 575 to 585 the composition is skewed to basic and acidic residues; that stretch reads RDLDTRPEENR.

The protein resides in the nucleus. Probable transcription factor that binds specific DNA sequence. In Arabidopsis thaliana (Mouse-ear cress), this protein is Trihelix transcription factor GTL2.